The following is a 220-amino-acid chain: Protein-methionine-sulfoxide reductase heme-binding subunit MsrQ (220 aa).

6 consecutive transmembrane segments (helical) span residues 20–40, 52–72, 86–106, 122–142, 153–173, and 175–195; these read LWLL…LGAT, EHLL…VTPI, ALGL…MVLD, PFIT…LTSN, WSSL…HFLM, and VKSW…LLLW.

Belongs to the MsrQ family. As to quaternary structure, heterodimer of a catalytic subunit (MsrP) and a heme-binding subunit (MsrQ). The cofactor is FMN. Requires heme b as cofactor.

The protein localises to the cell inner membrane. In terms of biological role, part of the MsrPQ system that repairs oxidized periplasmic proteins containing methionine sulfoxide residues (Met-O), using respiratory chain electrons. Thus protects these proteins from oxidative-stress damage caused by reactive species of oxygen and chlorine generated by the host defense mechanisms. MsrPQ is essential for the maintenance of envelope integrity under bleach stress, rescuing a wide series of structurally unrelated periplasmic proteins from methionine oxidation. MsrQ provides electrons for reduction to the reductase catalytic subunit MsrP, using the quinone pool of the respiratory chain. This chain is Protein-methionine-sulfoxide reductase heme-binding subunit MsrQ, found in Brucella abortus (strain S19).